The chain runs to 162 residues: uncharacterized protein (162 aa).

This is an uncharacterized protein from Acidianus sp. F28 (AFV-2).